Consider the following 179-residue polypeptide: Large ribosomal subunit protein uL5 (179 aa).

It belongs to the universal ribosomal protein uL5 family. As to quaternary structure, part of the 50S ribosomal subunit; part of the 5S rRNA/L5/L18/L25 subcomplex. Contacts the 5S rRNA and the P site tRNA. Forms a bridge to the 30S subunit in the 70S ribosome.

In terms of biological role, this is one of the proteins that bind and probably mediate the attachment of the 5S RNA into the large ribosomal subunit, where it forms part of the central protuberance. In the 70S ribosome it contacts protein S13 of the 30S subunit (bridge B1b), connecting the 2 subunits; this bridge is implicated in subunit movement. Contacts the P site tRNA; the 5S rRNA and some of its associated proteins might help stabilize positioning of ribosome-bound tRNAs. The chain is Large ribosomal subunit protein uL5 from Herpetosiphon aurantiacus (strain ATCC 23779 / DSM 785 / 114-95).